We begin with the raw amino-acid sequence, 262 residues long: uncharacterized protein (262 aa).

This is an uncharacterized protein from Bacillus subtilis (strain 168).